The following is a 100-amino-acid chain: NADH-quinone oxidoreductase subunit K (100 aa).

A run of 3 helical transmembrane segments spans residues 4-24, 29-49, and 60-80; these read LSNY…GVLT, IVVF…FVAF, and IFVF…LALF.

It belongs to the complex I subunit 4L family. NDH-1 is composed of 14 different subunits. Subunits NuoA, H, J, K, L, M, N constitute the membrane sector of the complex.

The protein resides in the cell inner membrane. It catalyses the reaction a quinone + NADH + 5 H(+)(in) = a quinol + NAD(+) + 4 H(+)(out). Its function is as follows. NDH-1 shuttles electrons from NADH, via FMN and iron-sulfur (Fe-S) centers, to quinones in the respiratory chain. The immediate electron acceptor for the enzyme in this species is believed to be ubiquinone. Couples the redox reaction to proton translocation (for every two electrons transferred, four hydrogen ions are translocated across the cytoplasmic membrane), and thus conserves the redox energy in a proton gradient. The chain is NADH-quinone oxidoreductase subunit K from Trichlorobacter lovleyi (strain ATCC BAA-1151 / DSM 17278 / SZ) (Geobacter lovleyi).